Consider the following 436-residue polypeptide: T-box transcription factor T (436 aa).

A DNA-binding region (T-box) is located at residues 51-219; it reads LWLRFKELTN…YNPFAKAFLD (169 aa).

In terms of assembly, monomer. Binds DNA as a monomer.

It localises to the nucleus. Involved in the transcriptional regulation of genes required for mesoderm formation and differentiation. Binds to a palindromic T site 5'-TTCACACCTAGGTGTGAA-3' DNA sequence and activates gene transcription when bound to such a site. This is T-box transcription factor T from Mus musculus (Mouse).